The chain runs to 677 residues: Fidgetin-like protein 1 (677 aa).

Polar residues predominate over residues 203–216; that stretch reads TSSAPSGESTTATF. Disordered regions lie at residues 203–232, 249–324, and 337–378; these read TSSA…PQSF, VPSG…SFNG, and GIFG…TDDR. Lys226 is covalently cross-linked (Glycyl lysine isopeptide (Lys-Gly) (interchain with G-Cter in SUMO2)). The span at 264–280 shows a compositional bias: polar residues; the sequence is DSDTINMLSNPTLNKAP. Positions 281–292 are enriched in basic and acidic residues; that stretch reads SKTEDSGQREDN. An N6-acetyllysine modification is found at Lys341. Residues 347-358 are compositionally biased toward polar residues; it reads SNKQDGSEQNGN. Residues Ala407 and 447–452 each bind ATP; that span reads GTGKTL.

This sequence belongs to the AAA ATPase family. In terms of assembly, hexamer. Interacts (via N-terminal one-half region) with RAD51; the interaction is direct. Interacts (via N-terminal one-half region) with SPIDR (via the C-terminal region); the interaction is direct. Interacts with FIRRM; may regulate homologous recombination. It depends on Mg(2+) as a cofactor.

The protein resides in the nucleus. Its subcellular location is the cytoplasm. The protein localises to the perinuclear region. The enzyme catalyses ATP + H2O = ADP + phosphate + H(+). Involved in DNA double-strand break (DBS) repair via homologous recombination (HR). Recruited at DSB sites independently of BRCA2, RAD51 and RAD51 paralogs in a H2AX-dependent manner. May regulate osteoblast proliferation and differentiation. May play a role in the control of male meiosis dynamic. This Rattus norvegicus (Rat) protein is Fidgetin-like protein 1 (Fignl1).